The primary structure comprises 445 residues: tRNA modification GTPase MnmE (445 aa).

3 residues coordinate (6S)-5-formyl-5,6,7,8-tetrahydrofolate: R20, E79, and K119. One can recognise a TrmE-type G domain in the interval 215–371; it reads GLKLAIIGPP…ILKNIENIAE (157 aa). N225 lines the K(+) pocket. GTP contacts are provided by residues 225-230, 244-250, and 269-272; these read NVGKSS, SNIAGTT, and DTAG. S229 serves as a coordination point for Mg(2+). K(+) contacts are provided by S244, I246, and T249. T250 provides a ligand contact to Mg(2+). Residue K445 coordinates (6S)-5-formyl-5,6,7,8-tetrahydrofolate.

This sequence belongs to the TRAFAC class TrmE-Era-EngA-EngB-Septin-like GTPase superfamily. TrmE GTPase family. In terms of assembly, homodimer. Heterotetramer of two MnmE and two MnmG subunits. K(+) serves as cofactor.

It is found in the cytoplasm. Exhibits a very high intrinsic GTPase hydrolysis rate. Involved in the addition of a carboxymethylaminomethyl (cmnm) group at the wobble position (U34) of certain tRNAs, forming tRNA-cmnm(5)s(2)U34. The polypeptide is tRNA modification GTPase MnmE (Rickettsia rickettsii (strain Iowa)).